Here is a 723-residue protein sequence, read N- to C-terminus: Probable cadmium-transporting ATPase (723 aa).

Positions Glu12–Thr75 constitute an HMA domain. Positions 23 and 26 each coordinate Cd(2+). Transmembrane regions (helical) follow at residues Ser103–Gly123, Ile127–Val147, Ile168–Ile188, Tyr329–Phe349, and Leu361–Val381. The active-site 4-aspartylphosphate intermediate is Asp412. The next 2 membrane-spanning stretches (helical) occupy residues Ile671–Val690 and Trp694–Leu716.

The protein belongs to the cation transport ATPase (P-type) (TC 3.A.3) family. Type IB subfamily.

The protein resides in the cell membrane. It catalyses the reaction Cd(2+)(in) + ATP + H2O = Cd(2+)(out) + ADP + phosphate + H(+). Functionally, couples the hydrolysis of ATP with the export of cadmium. This Alkalihalophilus pseudofirmus (strain ATCC BAA-2126 / JCM 17055 / OF4) (Bacillus pseudofirmus) protein is Probable cadmium-transporting ATPase (cadA).